A 457-amino-acid chain; its full sequence is Putative hexose transporter 12 (457 aa).

Residues 1 to 2 are Cytoplasmic-facing; it reads MG. Residues 3–23 form a helical membrane-spanning segment; sequence LIVSIFNIGCAIGGIVLSKVG. The Extracellular portion of the chain corresponds to 24–29; the sequence is DIYGRR. A helical membrane pass occupies residues 30–50; sequence IGLITVTAIYVVGILIQITSI. Residues 51–60 are Cytoplasmic-facing; the sequence is NKWYQYFIGR. The chain crosses the membrane as a helical span at residues 61-81; the sequence is IISGIGVGGIAVLSPMLISEV. Residues 82 to 87 lie on the Extracellular side of the membrane; sequence APKHIR. The chain crosses the membrane as a helical span at residues 88–108; it reads GTLVQLYQLMGTMGIFLGYCT. The Cytoplasmic segment spans residues 109-122; that stretch reads NYGTKNYHNATQWR. Residues 123–143 traverse the membrane as a helical segment; sequence VGLGLCFAWATFMVSGMMFVP. At 144–247 the chain is on the extracellular side; the sequence is ESPRYLIEVG…KSVGLKDSFQ (104 aa). Asn-194 is a glycosylation site (N-linked (GlcNAc...) asparagine). The chain crosses the membrane as a helical span at residues 248–268; sequence TSIIIGVVNFFSSFIAVYTIE. Residues 269–274 lie on the Cytoplasmic side of the membrane; sequence RFGRRT. Residues 275 to 295 form a helical membrane-spanning segment; the sequence is CLLWGAASMLCCFAVFASVGV. Over 296 to 319 the chain is Extracellular; it reads TKLWPQGSSHQDITSQGAGNCMIV. Residues 320–340 form a helical membrane-spanning segment; sequence FTMFFIFSFATTWAGGCFVIV. At 341–353 the chain is on the cytoplasmic side; that stretch reads SETFPLRAKSRGM. A helical transmembrane segment spans residues 354 to 374; the sequence is AIATAANWMWGFLISFFTPFI. At 375–379 the chain is on the extracellular side; it reads TGAIN. The helical transmembrane segment at 380–400 threads the bilayer; it reads FYYGYVFLGCLVFAYFYVFFF. Over 401-457 the chain is Cytoplasmic; sequence VPETKGLTLEEVNTMWLEGVPAWKSASWVPPERRTADYDADAIDHDNRPIYKRFFSS.

It belongs to the major facilitator superfamily. Sugar transporter (TC 2.A.1.1) family.

The protein resides in the membrane. Functionally, probable glucose transporter. In Saccharomyces cerevisiae (strain ATCC 204508 / S288c) (Baker's yeast), this protein is Putative hexose transporter 12 (HXT12).